The chain runs to 261 residues: MVSWIISRAVVLVFGLLYPAYASYKAVKTKNVRDYVRWMMYWIVFALFMTVETFTDIFIAWFPFYYEIKMAFVVWLLSPYTRGASLLYRKCIHPTLSLKEKEIDSYIIQAKERSYESFVNIGRKGLNIAASAAVQAATKGQGALVGRLRSFSMQDLRALPDDTPIHYTDALYPDEPQLHRRPMGFPTTSQADSDSMDERWSDSEIAETRTAARTRGGMPSKSLQRSQSLRVSKKKGLSREVSTKTTKPRAKKKPAQSEPEN.

The next 2 helical transmembrane spans lie at 1–21 (MVSWIISRAVVLVFGLLYPAY) and 35–55 (YVRWMMYWIVFALFMTVETFT). The segment at 167–261 (YTDALYPDEP…KKPAQSEPEN (95 aa)) is disordered. Residues 221–230 (KSLQRSQSLR) are compositionally biased toward polar residues.

It belongs to the DP1 family. In terms of assembly, interacts with microtubules. During gastrulation, expressed on the dorsal side of the embryo and then in the neural plate and neural tube. At tailbud stages, expressed in the somites, neural tube and otic vesicle.

The protein localises to the endoplasmic reticulum membrane. Microtubule-binding protein required to ensure proper cell division and nuclear envelope reassembly by sequestering the endoplasmic reticulum away from chromosomes during mitosis. Probably acts by clearing the endoplasmic reticulum membrane from metaphase chromosomes. May play a role in the maintenance of both the nervous system and the musculature. This chain is Receptor expression-enhancing protein 4 (reep4), found in Xenopus laevis (African clawed frog).